Reading from the N-terminus, the 311-residue chain is Chemotaxis protein CheV3 (311 aa).

Residues 13–164 (EIELVDFRIY…LESILDDLKL (152 aa)) form the CheW-like domain. Positions 182 to 308 (EVLFLDDSKT…FTEEISKILD (127 aa)) constitute a Response regulatory domain. Asp-241 carries the 4-aspartylphosphate modification.

Functionally, plays a role in chemotaxis signal transduction system in order to colonize the host stomach. May act as a phosphate sink to control the flow of phosphate to CheAY. The polypeptide is Chemotaxis protein CheV3 (Helicobacter pylori (strain ATCC 700392 / 26695) (Campylobacter pylori)).